A 601-amino-acid polypeptide reads, in one-letter code: ATP-dependent RNA helicase DeaD (601 aa).

The Q motif motif lies at 6–34 (STFSFLGLNPFIIQSLNEMGYVKPSPIQA). The Helicase ATP-binding domain occupies 37-208 (IPLLLEGRDV…KRFMRNPKEI (172 aa)). 50–57 (AQTGSGKT) provides a ligand contact to ATP. Positions 156 to 159 (DEAD) match the DEAD box motif. The 148-residue stretch at 231–378 (KTDALIRFLE…EVQLPKVELL (148 aa)) folds into the Helicase C-terminal domain. Basic and acidic residues predominate over residues 552 to 576 (SRHYENKTTHRSIFNKDKNSNRRVS). Positions 552–601 (SRHYENKTTHRSIFNKDKNSNRRVSDGSFNKSNSPKKTEFKSSFFRRRNV) are disordered.

Belongs to the DEAD box helicase family. DeaD/CsdA subfamily.

It localises to the cytoplasm. It carries out the reaction ATP + H2O = ADP + phosphate + H(+). Functionally, DEAD-box RNA helicase involved in various cellular processes at low temperature, including ribosome biogenesis, mRNA degradation and translation initiation. The polypeptide is ATP-dependent RNA helicase DeaD (Buchnera aphidicola subsp. Acyrthosiphon pisum (strain APS) (Acyrthosiphon pisum symbiotic bacterium)).